The chain runs to 149 residues: Transcriptional repressor NrdR (149 aa).

The segment at 3–34 is a zinc-finger region; sequence CPFCFAVDTKVIDSRLVGEGSSVRRRRQCLVC. The ATP-cone domain occupies 49–139; it reads PRVVKSNDVR…VYRSFEDIKE (91 aa).

It belongs to the NrdR family. Zn(2+) serves as cofactor.

Its function is as follows. Negatively regulates transcription of bacterial ribonucleotide reductase nrd genes and operons by binding to NrdR-boxes. This Shigella flexneri protein is Transcriptional repressor NrdR.